The primary structure comprises 533 residues: T-complex protein 1 subunit delta (533 aa).

The disordered stretch occupies residues 1 to 24; it reads MVVKPAARGMKPQGQAYKDKSKPA.

It belongs to the TCP-1 chaperonin family. As to quaternary structure, heterooligomeric complex of about 850 to 900 kDa that forms two stacked rings, 12 to 16 nm in diameter.

The protein resides in the cytoplasm. Its function is as follows. Molecular chaperone; assists the folding of proteins upon ATP hydrolysis. Known to play a role, in vitro, in the folding of actin and tubulin. The polypeptide is T-complex protein 1 subunit delta (Ochlerotatus triseriatus (Eastern treehole mosquito)).